Reading from the N-terminus, the 424-residue chain is CinA-like protein (424 aa).

This sequence belongs to the CinA family.

The sequence is that of CinA-like protein from Shewanella halifaxensis (strain HAW-EB4).